The chain runs to 470 residues: ATP synthase subunit beta 2 (470 aa).

An ATP-binding site is contributed by 155–162; the sequence is GGAGVGKT.

Belongs to the ATPase alpha/beta chains family. F-type ATPases have 2 components, CF(1) - the catalytic core - and CF(0) - the membrane proton channel. CF(1) has five subunits: alpha(3), beta(3), gamma(1), delta(1), epsilon(1). CF(0) has three main subunits: a(1), b(2) and c(9-12). The alpha and beta chains form an alternating ring which encloses part of the gamma chain. CF(1) is attached to CF(0) by a central stalk formed by the gamma and epsilon chains, while a peripheral stalk is formed by the delta and b chains.

The protein localises to the cell inner membrane. It catalyses the reaction ATP + H2O + 4 H(+)(in) = ADP + phosphate + 5 H(+)(out). Functionally, produces ATP from ADP in the presence of a proton gradient across the membrane. The catalytic sites are hosted primarily by the beta subunits. This chain is ATP synthase subunit beta 2, found in Nitrosospira multiformis (strain ATCC 25196 / NCIMB 11849 / C 71).